An 808-amino-acid polypeptide reads, in one-letter code: Leucine-rich repeat-containing protein 41 (808 aa).

An interaction with Elongin BC complex region spans residues 45–54 (ALFELCGRAV). 3 positions are modified to phosphoserine: S155, S276, and S326. 2 disordered regions span residues 269–289 (ASRG…SRRP) and 304–404 (TRRK…GSGA). T327 bears the Phosphothreonine mark. Residues 357–379 (PSSAPTAASSSTSSKRAPASSVS) show a composition bias toward low complexity. At S369 the chain carries Phosphoserine. Residues 383 to 397 (PLKRFKRATGKKGPR) show a composition bias toward basic residues. LRR repeat units follow at residues 483-503 (WVSL…IFRL), 514-526 (AGCR…LSDL), 527-551 (FSPL…VLSI), 609-631 (SGSL…FGLV), 632-655 (LQTL…LADC), 697-724 (NSTL…VFSE), and 727-748 (SSSL…LLEF).

As to quaternary structure, part of an E3 ubiquitin-protein ligase complex with Elongin BC (ELOB and ELOC), RBX1 and CUL5. Component of a probable ECS(LRRC41) complex which contains CUL5, RNF7/RBX2, Elongin BC and LRRC41. Interacts with CUL5, RNF7, ELOB and ELOC.

Its pathway is protein modification; protein ubiquitination. Its function is as follows. Probable substrate recognition component of an ECS (Elongin BC-CUL2/5-SOCS-box protein) E3 ubiquitin ligase complex which mediates the ubiquitination and subsequent proteasomal degradation of target proteins. The sequence is that of Leucine-rich repeat-containing protein 41 (Lrrc41) from Rattus norvegicus (Rat).